A 122-amino-acid chain; its full sequence is Large ribosomal subunit protein uL14 (122 aa).

Belongs to the universal ribosomal protein uL14 family. As to quaternary structure, part of the 50S ribosomal subunit. Forms a cluster with proteins L3 and L19. In the 70S ribosome, L14 and L19 interact and together make contacts with the 16S rRNA in bridges B5 and B8.

In terms of biological role, binds to 23S rRNA. Forms part of two intersubunit bridges in the 70S ribosome. The sequence is that of Large ribosomal subunit protein uL14 from Brevibacillus brevis (strain 47 / JCM 6285 / NBRC 100599).